Consider the following 772-residue polypeptide: Mitochondrial intermediate peptidase (772 aa).

Residues 1–37 constitute a mitochondrion transit peptide; the sequence is MLRTIILKAGSNASIPSLSRQNKLLRFFATAGAVSRT. Position 558 (histidine 558) interacts with Zn(2+). Residue glutamate 559 is part of the active site. Positions 562 and 565 each coordinate Zn(2+).

This sequence belongs to the peptidase M3 family. Zn(2+) serves as cofactor.

Its subcellular location is the mitochondrion matrix. It carries out the reaction Release of an N-terminal octapeptide as second stage of processing of some proteins imported into the mitochondrion.. Stimulated by Fe(2+). Its function is as follows. Cleaves proteins, imported into the mitochondrion, to their mature size. While most mitochondrial precursor proteins are processed to the mature form in one step by mitochondrial processing peptidase (MPP), the sequential cleavage by MIP of an octapeptide after initial processing by MPP is a required step for a subgroup of nuclear-encoded precursor proteins destined for the matrix or the inner membrane. Cleaves precursor proteins of respiratory components, including subunits of the electron transport chain and tricarboxylic acid cycle enzymes, and components of the mitochondrial genetic machinery, including ribosomal proteins, translation factors, and proteins required for mitochondrial DNA metabolism. The chain is Mitochondrial intermediate peptidase (OCT1) from Saccharomyces cerevisiae (strain YJM789) (Baker's yeast).